Consider the following 349-residue polypeptide: Isopentenyl-diphosphate delta-isomerase (349 aa).

6-7 (RK) is a binding site for substrate. FMN contacts are provided by residues 62 to 64 (AMT), serine 93, and asparagine 122. A substrate-binding site is contributed by glutamine 152. A Mg(2+)-binding site is contributed by glutamate 153. Residues lysine 184, threonine 214, 259-261 (GVR), and 280-281 (AG) each bind FMN.

This sequence belongs to the IPP isomerase type 2 family. In terms of assembly, homooctamer. Dimer of tetramers. FMN is required as a cofactor. Requires NADPH as cofactor. The cofactor is Mg(2+).

The protein resides in the cytoplasm. The enzyme catalyses isopentenyl diphosphate = dimethylallyl diphosphate. Functionally, involved in the biosynthesis of isoprenoids. Catalyzes the 1,3-allylic rearrangement of the homoallylic substrate isopentenyl (IPP) to its allylic isomer, dimethylallyl diphosphate (DMAPP). The sequence is that of Isopentenyl-diphosphate delta-isomerase from Geobacillus sp. (strain WCH70).